The following is a 780-amino-acid chain: RNA-binding protein Pasilla (780 aa).

Disordered stretches follow at residues 31-50 (LQHQ…QQLE), 76-113 (QPRH…SSSI), and 150-190 (QIES…ATAS). 3 stretches are compositionally biased toward low complexity: residues 79–91 (HSTT…STHS), 99–113 (SSNS…SSSI), and 176–190 (PNGT…ATAS). KH domains lie at 273 to 340 (TYHM…MEFI), 366 to 432 (DKQV…CKMI), and 691 to 758 (KDSK…QYLI). Positions 674–693 (AQLGGLSKSPTPGDLSSKDS) are disordered. The segment at 686–776 (GDLSSKDSKN…TKRARQIPLT (91 aa)) is required for RNA binding.

As to expression, expressed in the central nervous system in mushroom body neurons (at protein level).

The protein resides in the nucleus. The protein localises to the cytoplasm. In terms of biological role, functions to regulate alternative splicing in neurons by binding pre-mRNA in a sequence-specific manner to activate exon inclusion. Plays a role in long-term memory formation by processing the unspliced Orb2-isoform A (Orb2A) mRNA and thereby controlling Orb2A protein abundance. This Drosophila melanogaster (Fruit fly) protein is RNA-binding protein Pasilla.